Consider the following 157-residue polypeptide: Endoribonuclease YbeY (157 aa).

His-116, His-120, and His-126 together coordinate Zn(2+).

It belongs to the endoribonuclease YbeY family. Zn(2+) serves as cofactor.

It localises to the cytoplasm. In terms of biological role, single strand-specific metallo-endoribonuclease involved in late-stage 70S ribosome quality control and in maturation of the 3' terminus of the 16S rRNA. The sequence is that of Endoribonuclease YbeY from Renibacterium salmoninarum (strain ATCC 33209 / DSM 20767 / JCM 11484 / NBRC 15589 / NCIMB 2235).